The sequence spans 319 residues: ATP-dependent 6-phosphofructokinase 1 (319 aa).

Glycine 11 contributes to the ATP binding site. 21–25 is a binding site for ADP; that stretch reads RAVTR. Residues 72–73 and 102–105 contribute to the ATP site; these read RC and GDGS. Residue aspartate 103 participates in Mg(2+) binding. Residue 125–127 participates in substrate binding; the sequence is TID. Aspartate 127 serves as the catalytic Proton acceptor. Arginine 154 serves as a coordination point for ADP. Substrate-binding positions include arginine 162 and 169–171; that span reads MGR. ADP-binding positions include 185–187 and 213–215; these read GAE and KTH. Substrate contacts are provided by residues glutamate 222, arginine 243, and 249-252; that span reads HIQR.

The protein belongs to the phosphofructokinase type A (PFKA) family. ATP-dependent PFK group I subfamily. Prokaryotic clade 'B1' sub-subfamily. Homotetramer. The cofactor is Mg(2+).

It localises to the cytoplasm. The catalysed reaction is beta-D-fructose 6-phosphate + ATP = beta-D-fructose 1,6-bisphosphate + ADP + H(+). The protein operates within carbohydrate degradation; glycolysis; D-glyceraldehyde 3-phosphate and glycerone phosphate from D-glucose: step 3/4. Its activity is regulated as follows. Allosterically activated by ADP and other diphosphonucleosides, and allosterically inhibited by phosphoenolpyruvate. Its function is as follows. Catalyzes the phosphorylation of D-fructose 6-phosphate to fructose 1,6-bisphosphate by ATP, the first committing step of glycolysis. The protein is ATP-dependent 6-phosphofructokinase 1 of Clostridium perfringens (strain 13 / Type A).